A 341-amino-acid chain; its full sequence is MSLPAKTLVQAAANSGLRAVSVRHSSQAPKVALLGAAGGIGQPLGLLLKQDPLVAHLALYDVVNTPGVAADLSHIDSNAKVTAHTGPKELYAAVENADVIVIPAGVPRKPGMTRDDLFNTNAGIVRDLAAVIAKASPKALIAIITNPVNSTVPIASEVLKKAGVYDPKRVFGVTTLDVVRSQAFVSELKGHDASKTVVPVVGGHAGITIIPLLSQVKPSTKFSEEEISKLTPRIQDAGTEVVNAKAGAGSATLSMALAGARFANALVRGIKGEKNVQCAYVASDAVKGVEYFSTPVELGPNGVEKILGVGKVSAYEQKLIDASVPELNKNIAKGVAFVKGN.

Residues 35–41 (GAAGGIG) and D61 each bind NAD(+). Positions 108 and 114 each coordinate substrate. NAD(+) contacts are provided by residues N121 and 144 to 146 (ITN). Substrate contacts are provided by N146 and R180. H204 acts as the Proton acceptor in catalysis. M255 serves as a coordination point for NAD(+).

This sequence belongs to the LDH/MDH superfamily. MDH type 1 family. As to quaternary structure, homodimer.

The protein localises to the mitochondrion matrix. It carries out the reaction (S)-malate + NAD(+) = oxaloacetate + NADH + H(+). Its function is as follows. Catalyzes the reversible conversion of (S)-malate to oxaloacetate in the citric acid cycle. The chain is Malate dehydrogenase, mitochondrial from Caenorhabditis elegans.